The sequence spans 89 residues: Small ribosomal subunit protein uS15 (89 aa).

This sequence belongs to the universal ribosomal protein uS15 family. In terms of assembly, part of the 30S ribosomal subunit. Forms a bridge to the 50S subunit in the 70S ribosome, contacting the 23S rRNA.

Functionally, one of the primary rRNA binding proteins, it binds directly to 16S rRNA where it helps nucleate assembly of the platform of the 30S subunit by binding and bridging several RNA helices of the 16S rRNA. In terms of biological role, forms an intersubunit bridge (bridge B4) with the 23S rRNA of the 50S subunit in the ribosome. This Geobacillus sp. (strain WCH70) protein is Small ribosomal subunit protein uS15.